We begin with the raw amino-acid sequence, 471 residues long: PE-PGRS family protein PE_PGRS33 (471 aa).

The tract at residues 1–30 is essential for translocation to the cell surface; that stretch reads MSFVVTIPEALAAVATDLAGIGSTIGTANA. The 93-residue stretch at 1–93 folds into the PE domain; the sequence is MSFVVTIPEA…AGSYAAAEAA (93 aa). The tract at residues 140–230 is interacts with TLR2; that stretch reads GNGGAGGSGA…GLFFGVGGAG (91 aa).

The protein belongs to the mycobacterial PE family. PGRS subfamily. Interacts with human TLR2.

The protein localises to the secreted. It localises to the cell wall. It is found in the cell surface. Its subcellular location is the cell outer membrane. Functionally, induces TNF-alpha release through human Toll-like receptor 2 (TLR2) signaling pathway, leading to macrophage apoptosis. The sequence is that of PE-PGRS family protein PE_PGRS33 (PE_PGRS33) from Mycobacterium tuberculosis (strain CDC 1551 / Oshkosh).